The following is a 109-amino-acid chain: Ubiquitin-related modifier 1 homolog (109 aa).

A 1-thioglycine modification is found at Gly109. Residue Gly109 forms a Glycyl lysine isopeptide (Gly-Lys) (interchain with K-? in acceptor proteins) linkage.

Belongs to the URM1 family. Post-translationally, C-terminal thiocarboxylation occurs in 2 steps, it is first acyl-adenylated (-COAMP) via the hesA/moeB/thiF part of the MOCS3 homolog, then thiocarboxylated (-COSH) via the rhodanese domain of the MOCS3 homolog.

It is found in the cytoplasm. It functions in the pathway tRNA modification; 5-methoxycarbonylmethyl-2-thiouridine-tRNA biosynthesis. Functionally, acts as a sulfur carrier required for 2-thiolation of mcm(5)S(2)U at tRNA wobble positions of cytosolic tRNA(Lys), tRNA(Glu) and tRNA(Gln). Serves as sulfur donor in tRNA 2-thiolation reaction by being thiocarboxylated (-COSH) at its C-terminus by MOCS3. The sulfur is then transferred to tRNA to form 2-thiolation of mcm(5)S(2)U. Also acts as a ubiquitin-like protein (UBL) that is covalently conjugated via an isopeptide bond to lysine residues of target proteins. The thiocarboxylated form serves as substrate for conjugation and oxidative stress specifically induces the formation of UBL-protein conjugates. This is Ubiquitin-related modifier 1 homolog from Bombyx mori (Silk moth).